A 254-amino-acid chain; its full sequence is Putative epimerase LsrE (254 aa).

The helical transmembrane segment at 14-34 threads the bilayer; it reads VALLASYPLSVGILAGQWIAL. Residues histidine 50, aspartate 52, and histidine 81 each contribute to the a divalent metal cation site. Aspartate 52 serves as the catalytic Proton acceptor. Substrate is bound by residues histidine 81, 166–169, 199–201, and 221–222; these read GYGS, DGS, and GS. An a divalent metal cation-binding site is contributed by aspartate 199. Aspartate 199 serves as the catalytic Proton donor.

The protein belongs to the ribulose-phosphate 3-epimerase family. A divalent metal cation is required as a cofactor.

The protein resides in the cell membrane. This chain is Putative epimerase LsrE (lsrE), found in Salmonella paratyphi A (strain ATCC 9150 / SARB42).